A 303-amino-acid chain; its full sequence is Large ribosomal subunit protein uL1m (303 aa).

This sequence belongs to the universal ribosomal protein uL1 family. As to quaternary structure, component of the mitochondrial large ribosomal subunit (mt-LSU). Mature N.crassa 74S mitochondrial ribosomes consist of a small (37S) and a large (54S) subunit. The 37S small subunit contains a 16S ribosomal RNA (16S mt-rRNA) and 32 different proteins. The 54S large subunit contains a 23S rRNA (23S mt-rRNA) and 42 different proteins.

It is found in the mitochondrion. Component of the mitochondrial ribosome (mitoribosome), a dedicated translation machinery responsible for the synthesis of mitochondrial genome-encoded proteins, including at least some of the essential transmembrane subunits of the mitochondrial respiratory chain. The mitoribosomes are attached to the mitochondrial inner membrane and translation products are cotranslationally integrated into the membrane. The sequence is that of Large ribosomal subunit protein uL1m (mrpl1) from Neurospora crassa (strain ATCC 24698 / 74-OR23-1A / CBS 708.71 / DSM 1257 / FGSC 987).